A 430-amino-acid chain; its full sequence is MLDIKQIRENPELVQEKLNRRSAAKDYDLTPILQLDERQRELESSRVQLQTRGNEISKLIPQKIKGGSDPKGEEIKALKEEGNTVKNQLSSLEPQEKEIKAQIESLLLQLPNLPSDSTPLGKDETENVEIRRWGDEYLPKIKVLPHWEIGEKLGILDFERAVKVAQSRFVNLIGAGAALERALINFMLDRQIEAGYLEVMPPILINTTSLQGTGQLPKFSEESFKCSEDELWLAPTAEVPVTNLYRDNVIEGEQLPIKHCAYTPCFRREAGSYGKDTRGLIRLHQFNKVELVKLVHPETSEAEHEALVKDAEAILQALKLPYRVIELCTGDLGFGAAKCYDIEVWLPSSDTYREISSCSNFRDFQARRANIRFKEKGKKGTQYVHTLNGSGLAIGRTMSAILENYQQEDGTIKVPEVLQPYLKREVIGKS.

236-238 (TAE) provides a ligand contact to L-serine. 267–269 (RRE) is a binding site for ATP. E290 lines the L-serine pocket. 354–357 (EISS) serves as a coordination point for ATP. Residue S390 participates in L-serine binding.

Belongs to the class-II aminoacyl-tRNA synthetase family. Type-1 seryl-tRNA synthetase subfamily. As to quaternary structure, homodimer. The tRNA molecule binds across the dimer.

It localises to the cytoplasm. The catalysed reaction is tRNA(Ser) + L-serine + ATP = L-seryl-tRNA(Ser) + AMP + diphosphate + H(+). The enzyme catalyses tRNA(Sec) + L-serine + ATP = L-seryl-tRNA(Sec) + AMP + diphosphate + H(+). Its pathway is aminoacyl-tRNA biosynthesis; selenocysteinyl-tRNA(Sec) biosynthesis; L-seryl-tRNA(Sec) from L-serine and tRNA(Sec): step 1/1. Functionally, catalyzes the attachment of serine to tRNA(Ser). Is also able to aminoacylate tRNA(Sec) with serine, to form the misacylated tRNA L-seryl-tRNA(Sec), which will be further converted into selenocysteinyl-tRNA(Sec). In Gloeothece citriformis (strain PCC 7424) (Cyanothece sp. (strain PCC 7424)), this protein is Serine--tRNA ligase.